The chain runs to 792 residues: Oxidoreductase cns1 (792 aa).

In terms of assembly, interacts with cns2.

The protein localises to the lipid droplet. The protein operates within secondary metabolite biosynthesis. In terms of biological role, oxidoreductase; part of the gene cluster that mediates the biosynthesis of cordycepin (COR) and pentostatin (PTN), two adenosine analogs with related bioactivity profiles as both mimic adenosine and can inhibit some of the processes that are adenosine dependent. Within the pathway, cns1 catalyzes the last step by converting the cns2 product 2'-carbonyl-3'-deoxyadenosine (2'-C-3'-dA) into cordycepin (3'-deoxyadenosine). The first step of cordycepin biosynthesis involves hydroxyl phosphorylation of the 3'-OH position on adenosine to produce adenosine-3'-monophosphate (3'-AMP), catalyzed by kinase activity of cns3. Next, 3'-AMP is dephosphorylated to 2'-carbonyl-3'-deoxyadenosine by cns2, which is finally converted to cordycepin by the oxidoreductase cns1. Pentostatin production is mediated by the ATP phosphoribosyltransferase activity of cns3 on adenosine to inhibit the activity of adenosine deaminase (ADA) to prevent COR deamination to 3'-deoxyinosine (3'-dI). The chain is Oxidoreductase cns1 from Cordyceps militaris (strain CM01) (Caterpillar fungus).